Consider the following 522-residue polypeptide: Peptide methionine sulfoxide reductase MsrA/MsrB (522 aa).

Residues 17-174 form the Thioredoxin domain; sequence LALGACSPKI…ALALIRDPNA (158 aa). A disulfide bond links Cys-68 and Cys-71. The peptide methionine sulfoxide reductase A stretch occupies residues 199–354; that stretch reads RTIYLAGGCF…PNGYCHIDIR (156 aa). Cys-207 is a catalytic residue. In terms of domain architecture, MsrB spans 383-506; sequence DAELKRTLTE…NGASLKFIPL (124 aa). Cysteines 440 and 495 form a disulfide. The active-site Nucleophile is Cys-495.

The protein in the N-terminal section; belongs to the thioredoxin family. It in the central section; belongs to the MsrA Met sulfoxide reductase family. In the C-terminal section; belongs to the MsrB Met sulfoxide reductase family.

The enzyme catalyses L-methionyl-[protein] + [thioredoxin]-disulfide + H2O = L-methionyl-(S)-S-oxide-[protein] + [thioredoxin]-dithiol. The catalysed reaction is [thioredoxin]-disulfide + L-methionine + H2O = L-methionine (S)-S-oxide + [thioredoxin]-dithiol. It catalyses the reaction L-methionyl-[protein] + [thioredoxin]-disulfide + H2O = L-methionyl-(R)-S-oxide-[protein] + [thioredoxin]-dithiol. Functionally, has an important function as a repair enzyme for proteins that have been inactivated by oxidation. Catalyzes the reversible oxidation-reduction of methionine sulfoxide in proteins to methionine. This is Peptide methionine sulfoxide reductase MsrA/MsrB (msrAB) from Neisseria meningitidis serogroup A / serotype 4A (strain DSM 15465 / Z2491).